The primary structure comprises 378 residues: Glutamate 5-kinase (378 aa).

Lys-19 lines the ATP pocket. The substrate site is built by Ser-59, Asp-146, and Asn-158. ATP-binding positions include 178-179 (TD) and 220-226 (TGGMATK). In terms of domain architecture, PUA spans 285 to 363 (QGQIQVDAGA…GEIGEILGYK (79 aa)).

Belongs to the glutamate 5-kinase family.

It is found in the cytoplasm. The enzyme catalyses L-glutamate + ATP = L-glutamyl 5-phosphate + ADP. It participates in amino-acid biosynthesis; L-proline biosynthesis; L-glutamate 5-semialdehyde from L-glutamate: step 1/2. Catalyzes the transfer of a phosphate group to glutamate to form L-glutamate 5-phosphate. The sequence is that of Glutamate 5-kinase from Moorella thermoacetica (strain ATCC 39073 / JCM 9320).